A 265-amino-acid polypeptide reads, in one-letter code: Aquaporin-5 (265 aa).

At 1–12 the chain is on the cytoplasmic side; it reads MKKEVCSAAFLK. Residues 13-33 form a helical membrane-spanning segment; that stretch reads AVFAEFLATLIFVFFGLGSAL. Over 34-39 the chain is Extracellular; sequence KWPSAM. The chain crosses the membrane as a helical span at residues 40–60; the sequence is PSVLQISLAFGLAIGTMAQAL. The Cytoplasmic portion of the chain corresponds to 61–65; it reads GPVSG. The discontinuously helical intramembrane region spans 66 to 74; it reads GHMNPAITL. Positions 69–71 match the NPA 1 motif; it reads NPA. Residues 75–87 are Cytoplasmic-facing; it reads ALLVGNQISLLRA. The chain crosses the membrane as a helical span at residues 88-108; that stretch reads VFYLVAQLVGAIAGAAILYGL. Residues 109 to 126 are Extracellular-facing; the sequence is APYNARSNLAVNALNNNT. Asn124 and Asn125 each carry an N-linked (GlcNAc...) asparagine glycan. The helical transmembrane segment at 127–147 threads the bilayer; that stretch reads TAGQAVVAEMILTFQLALCVF. At 148 to 158 the chain is on the cytoplasmic side; that stretch reads SSTDSRRTSPV. A helical membrane pass occupies residues 159–179; that stretch reads GSPALSIGLSVTLGHLVGIYF. Residue Thr180 is a topological domain, extracellular. Residues 181–191 constitute an intramembrane region (discontinuously helical); that stretch reads GCSMNPARSFG. The NPA 2 signature appears at 185 to 187; it reads NPA. Topologically, residues 192-203 are extracellular; that stretch reads PAVIMSRFSSAH. Residues 204–224 form a helical membrane-spanning segment; it reads WVFWVGPIVGAATAAIIYFYL. At 225–265 the chain is on the cytoplasmic side; sequence LFPHSLSLSDRVAILKGTYEPDEDWEESQEERKKTMELTAH.

It belongs to the MIP/aquaporin (TC 1.A.8) family. As to quaternary structure, homotetramer; each monomer provides an independent water pore. Interacts with TRPV4; the interaction is probably indirect and regulates TRPV4 activation by hypotonicity.

It is found in the apical cell membrane. The protein localises to the cell membrane. It localises to the cytoplasmic vesicle membrane. It carries out the reaction H2O(in) = H2O(out). Its function is as follows. Aquaporins form homotetrameric transmembrane channels, with each monomer independently mediating water transport across the plasma membrane along its osmotic gradient. Plays an important role in fluid secretion in salivary glands. Required for TRPV4 activation by hypotonicity. Together with TRPV4, controls regulatory volume decrease in salivary epithelial cells. Seems to play a redundant role in water transport in the eye, lung and in sweat glands. The polypeptide is Aquaporin-5 (Ovis aries (Sheep)).